We begin with the raw amino-acid sequence, 61 residues long: UPF0434 protein MS0934 (61 aa).

Belongs to the UPF0434 family.

The chain is UPF0434 protein MS0934 from Mannheimia succiniciproducens (strain KCTC 0769BP / MBEL55E).